The chain runs to 216 residues: Pyrophosphatase PpaX (216 aa).

D9 serves as the catalytic Nucleophile.

Belongs to the HAD-like hydrolase superfamily. PpaX family. Mg(2+) serves as cofactor.

It carries out the reaction diphosphate + H2O = 2 phosphate + H(+). In terms of biological role, hydrolyzes pyrophosphate formed during P-Ser-HPr dephosphorylation by HPrK/P. Might play a role in controlling the intracellular pyrophosphate pool. The polypeptide is Pyrophosphatase PpaX (Bacillus cereus (strain ATCC 10987 / NRS 248)).